A 244-amino-acid chain; its full sequence is 7-cyano-7-deazaguanine synthase (244 aa).

ATP is bound at residue 14 to 24 (FSGGQDSATCV). The Zn(2+) site is built by Cys202, Cys217, Cys220, and Cys223.

The protein belongs to the QueC family. It depends on Zn(2+) as a cofactor.

The catalysed reaction is 7-carboxy-7-deazaguanine + NH4(+) + ATP = 7-cyano-7-deazaguanine + ADP + phosphate + H2O + H(+). It functions in the pathway purine metabolism; 7-cyano-7-deazaguanine biosynthesis. Catalyzes the ATP-dependent conversion of 7-carboxy-7-deazaguanine (CDG) to 7-cyano-7-deazaguanine (preQ(0)). The polypeptide is 7-cyano-7-deazaguanine synthase (Burkholderia cenocepacia (strain HI2424)).